We begin with the raw amino-acid sequence, 104 residues long: 11 kDa late embryogenesis abundant protein (104 aa).

Over residues 1 to 24 (MQSGKNAAASAKETAANVAASAKA) the composition is skewed to low complexity. The tract at residues 1–104 (MQSGKNAAAS…TGHRTGTGGI (104 aa)) is disordered. The segment covering 25-74 (GMEKTKASLQEKGEKMTAHDPMQKEMAREKKEERKHEAEYEKQAAKEHNA) has biased composition (basic and acidic residues). The segment covering 75–89 (AQKQTTGIGTGTHSY) has biased composition (polar residues).

This sequence belongs to the LEA type 1 family. Maximally expressed in dry seeds. Also present in mid-maturation embryos.

Functionally, LEA proteins are late embryonic proteins abundant in higher plant seed embryos. They may play an essential role in seed survival and in controlling water exchanges during seed desiccation and imbibition. The protein is 11 kDa late embryogenesis abundant protein of Helianthus annuus (Common sunflower).